A 51-amino-acid chain; its full sequence is Insulin (51 aa).

3 cysteine pairs are disulfide-bonded: cysteine 7/cysteine 37, cysteine 19/cysteine 50, and cysteine 36/cysteine 41.

It belongs to the insulin family. As to quaternary structure, heterodimer of a B chain and an A chain linked by two disulfide bonds.

The protein localises to the secreted. Functionally, insulin decreases blood glucose concentration. It increases cell permeability to monosaccharides, amino acids and fatty acids. It accelerates glycolysis, the pentose phosphate cycle, and glycogen synthesis in liver. This Meleagris gallopavo (Wild turkey) protein is Insulin (INS).